Consider the following 2176-residue polypeptide: Methyl-CpG-binding domain-containing protein 9 (2176 aa).

Positions 1 to 13 (MEPTDSTNEQLGD) are enriched in polar residues. Disordered stretches follow at residues 1–20 (MEPTDSTNEQLGDTKTAAVK) and 28–85 (GIDL…RDAS). Residues 83–133 (DASCGACGRPESIELVVVCDACERGFHMSCVNDGVEAAPSADWMCSDCRTG) form a PHD-type 1 zinc finger. The segment at 86-131 (CGACGRPESIELVVVCDACERGFHMSCVNDGVEAAPSADWMCSDCR) adopts an RING-type 1; degenerate zinc-finger fold. One can recognise an MBD domain in the interval 258 to 327 (RHFISERHGV…MDAEIRNENS (70 aa)). An FYR N-terminal domain is found at 403–456 (GCPMQFEDFFVLSLGRIDIRQSYHNVNVIYPIGYKSCWHDKITGSLFTCEVSDG). The stretch at 491–511 (EQNSDKLSNRRDSTQERDDDA) forms a coiled coil. The FYR C-terminal domain occupies 550 to 698 (SSRVDFDKNL…ESCTNYRTLK (149 aa)). 3 short sequence motifs (nuclear localization signal) span residues 914 to 921 (SRRGRKKD), 1124 to 1131 (KKRTYISV), and 1256 to 1263 (YRKLECLS). The stretch at 1098-1137 (PTKKAVLSLLADIRGGDLVQRSIKGTKKRTYISVSDVIMK) is one Pumilio repeat. One can recognise a Bromo domain in the interval 1130–1245 (SVSDVIMKKC…EKFKSLYEAE (116 aa)). Positions 1251–1273 (QKLKDYRKLECLSAEMKKEIKDI) form a coiled coil. The PHD-type 2 zinc finger occupies 1287-1337 (EGVCKVCGVDKDDDSVLLCDTCDAEYHTYCLNPPLIRIPDGNWYCPSCVIA). The RING-type 2; degenerate zinc finger occupies 1290–1335 (CKVCGVDKDDDSVLLCDTCDAEYHTYCLNPPLIRIPDGNWYCPSCV). A Nuclear localization signal motif is present at residues 1337–1344 (AKRMAQEA). Positions 1410–1437 (QHLEQCAEAIIEMQQKLRSLSSEWKNAK) form a coiled coil. Disordered stretches follow at residues 1472 to 1553 (GCDP…NLPE) and 1565 to 1595 (GRNHETHSPNSNAVELPTAHDASSQASQELQ). 3 stretches are compositionally biased toward polar residues: residues 1492-1513 (SSTAYLNKNQGKSPLETDTQPG), 1523-1532 (KISSPETISS), and 1585-1595 (DASSQASQELQ). A coiled-coil region spans residues 1588–1628 (SQASQELQACQQDLSATSNEIQNLQQSIRSIESQLLKQSIR). The Nuclear localization signal motif lies at 1761–1768 (EKRYGPCI). The disordered stretch occupies residues 2136–2176 (IDETKPIISLPDQKSQPVSDSQERSSRVRRSGKKRKEPEGS).

In terms of assembly, interacts with histone H4. In terms of tissue distribution, expressed in leaves, buds, flowers and stems.

It localises to the nucleus. The enzyme catalyses L-lysyl-[protein] + acetyl-CoA = N(6)-acetyl-L-lysyl-[protein] + CoA + H(+). In terms of biological role, probable transcriptional regulator that acts as a histone acetyltransferase. Mediates the acetylation of histone H3 and H4 of target loci (e.g. FLC). Involved in an auxin-independent regulation of shoot branching and flowering time. This chain is Methyl-CpG-binding domain-containing protein 9 (MBD9), found in Arabidopsis thaliana (Mouse-ear cress).